The sequence spans 379 residues: Succinyl-diaminopimelate desuccinylase (379 aa).

H70 is a binding site for Zn(2+). D72 is an active-site residue. Residue D103 coordinates Zn(2+). E137 functions as the Proton acceptor in the catalytic mechanism. Zn(2+) contacts are provided by E138, E166, and H352.

It belongs to the peptidase M20A family. DapE subfamily. In terms of assembly, homodimer. The cofactor is Zn(2+). It depends on Co(2+) as a cofactor.

It carries out the reaction N-succinyl-(2S,6S)-2,6-diaminopimelate + H2O = (2S,6S)-2,6-diaminopimelate + succinate. It participates in amino-acid biosynthesis; L-lysine biosynthesis via DAP pathway; LL-2,6-diaminopimelate from (S)-tetrahydrodipicolinate (succinylase route): step 3/3. In terms of biological role, catalyzes the hydrolysis of N-succinyl-L,L-diaminopimelic acid (SDAP), forming succinate and LL-2,6-diaminopimelate (DAP), an intermediate involved in the bacterial biosynthesis of lysine and meso-diaminopimelic acid, an essential component of bacterial cell walls. This chain is Succinyl-diaminopimelate desuccinylase, found in Shewanella baltica (strain OS223).